Here is a 499-residue protein sequence, read N- to C-terminus: Rhodopsin, GQ-coupled (499 aa).

Residues 1-50 are Extracellular-facing; it reads MADNKSTLPGLPDINGTLNRSMTPNTGWEGPYDMSVHLHWTQFPPVTEEW. Asn-4, Asn-15, and Asn-19 each carry an N-linked (GlcNAc...) asparagine glycan. The helical transmembrane segment at 51–75 threads the bilayer; that stretch reads HYIIGVYITIVGLLGIMGNTTVVYI. The Cytoplasmic segment spans residues 76 to 87; it reads FSNTKSLRSPSN. A helical membrane pass occupies residues 88–114; it reads LFVVNLAVSDLIFSAVNGFPLLTVSSF. At 115 to 128 the chain is on the extracellular side; the sequence is HQKWIFGSLFCQLY. Cys-125 and Cys-203 form a disulfide bridge. Residues 129-148 form a helical membrane-spanning segment; it reads GFVGGVFGLMSINTLTAISI. Residues 149-168 are Cytoplasmic-facing; that stretch reads DRYVVITKPLQASQTMTRRK. A helical membrane pass occupies residues 169-192; sequence VHLMIVIVWVLSILLSIPPFFGWG. The Extracellular portion of the chain corresponds to 193-216; it reads AYIPEGFQTSCTFDYLTKTARTRT. Residues 217–244 form a helical membrane-spanning segment; sequence YIVVLYLFGFLIPLIIIGVCYVLIIRGV. The Cytoplasmic portion of the chain corresponds to 245–278; that stretch reads RRHDQKMLTITRSMKTEDARANNKRARSELRISK. Residues 279–302 traverse the membrane as a helical segment; sequence IAMTVTCLFIISWSPYAIIALIAQ. At 303–310 the chain is on the extracellular side; sequence FGPAHWIT. Residues 311–335 traverse the membrane as a helical segment; it reads PLVSELPMMLAKSSSMHNPVVYALS. Lys-322 is subject to N6-(retinylidene)lysine. Residues 336–499 lie on the Cytoplasmic side of the membrane; that stretch reads HPKFRKALYQ…QRVNGLTFNS (164 aa). S-palmitoyl cysteine attachment occurs at residues Cys-353 and Cys-354.

This sequence belongs to the G-protein coupled receptor 1 family. Opsin subfamily. In terms of processing, phosphorylated on some or all of the serine and threonine residues present in the C-terminal region. Retina. Expressed in the depolarizing cell layer of the photoreceptor cells distant from the lens.

Its subcellular location is the membrane. Visual pigments such as rhodopsin and porphyropsin are light-absorbing molecules that mediate vision. Rhodopsin consists of an apoprotein, opsin, covalently linked to 11-cis-retinal. This receptor is coupled to the activation of phospholipase C. Porphyropsin consists of opsin covalently linked to 11-cis 3,4-didehydroretinal. This is Rhodopsin, GQ-coupled (SCOP1) from Mizuhopecten yessoensis (Japanese scallop).